Reading from the N-terminus, the 377-residue chain is Peroxisomal membrane protein PEX14 (377 aa).

Low complexity predominate over residues 1–20; that stretch reads MASSEQAEQPSQPSSSPGSE. The segment at 1 to 23 is disordered; sequence MASSEQAEQPSQPSSSPGSENVV. Ala-2 carries the N-acetylalanine modification. At 2 to 108 the chain is on the peroxisomal side; that stretch reads ASSEQAEQPS…CSPGSSRWRD (107 aa). N6-acetyllysine is present on Lys-34. The helical transmembrane segment at 109 to 126 threads the bilayer; the sequence is YGALAIIMAGIAFGFHQL. Residues 127 to 377 lie on the Cytoplasmic side of the membrane; that stretch reads YKKYLLPLIL…EGASNESERH (251 aa). Positions 230–377 are disordered; sequence PPSPSAPKIP…EGASNESERH (148 aa). Ser-232 is subject to Phosphoserine. 2 stretches are compositionally biased toward low complexity: residues 244-259 and 265-275; these read PVKSPSPSSPAAVNHH and SPVSNESTSSS. Residues Ser-282 and Ser-335 each carry the phosphoserine modification. Residues 323-342 are compositionally biased toward acidic residues; it reads KEEEEEEEEEDVSHVDEEDV. The span at 360-377 shows a compositional bias: basic and acidic residues; sequence QVDKLRRPEGASNESERH.

This sequence belongs to the peroxin-14 family. In terms of assembly, interacts with PEX13; forming the PEX13-PEX14 docking complex. Interacts with PEX5 (via WxxxF/Y motifs). Interacts with PEX19. Interacts with tubulin.

The protein localises to the peroxisome membrane. Component of the PEX13-PEX14 docking complex, a translocon channel that specifically mediates the import of peroxisomal cargo proteins bound to PEX5 receptor. The PEX13-PEX14 docking complex forms a large import pore which can be opened to a diameter of about 9 nm. Mechanistically, PEX5 receptor along with cargo proteins associates with the PEX14 subunit of the PEX13-PEX14 docking complex in the cytosol, leading to the insertion of the receptor into the organelle membrane with the concomitant translocation of the cargo into the peroxisome matrix. Plays a key role for peroxisome movement through a direct interaction with tubulin. The protein is Peroxisomal membrane protein PEX14 of Cricetulus longicaudatus (Long-tailed dwarf hamster).